A 124-amino-acid chain; its full sequence is Large ribosomal subunit protein bL12 (124 aa).

The protein belongs to the bacterial ribosomal protein bL12 family. Homodimer. Part of the ribosomal stalk of the 50S ribosomal subunit. Forms a multimeric L10(L12)X complex, where L10 forms an elongated spine to which 2 to 4 L12 dimers bind in a sequential fashion. Binds GTP-bound translation factors.

Its function is as follows. Forms part of the ribosomal stalk which helps the ribosome interact with GTP-bound translation factors. Is thus essential for accurate translation. This Nitrosomonas europaea (strain ATCC 19718 / CIP 103999 / KCTC 2705 / NBRC 14298) protein is Large ribosomal subunit protein bL12.